Here is a 300-residue protein sequence, read N- to C-terminus: 2-methylisocitrate lyase (300 aa).

Residue 53–55 (SGD) coordinates substrate. Mg(2+) contacts are provided by aspartate 92 and aspartate 94. Substrate-binding positions include 129 to 130 (CG), arginine 162, glutamate 192, 214 to 216 (NMT), arginine 245, and arginine 274.

Belongs to the isocitrate lyase/PEP mutase superfamily. Methylisocitrate lyase family. Requires Mg(2+) as cofactor.

The catalysed reaction is 3-hydroxybutane-1,2,3-tricarboxylate = pyruvate + succinate. In terms of biological role, involved in the methylcitric acid cycle. Catalyzes the cleavage of 2-methylisocitrate to yield pyruvate and succinate. In Halalkalibacterium halodurans (strain ATCC BAA-125 / DSM 18197 / FERM 7344 / JCM 9153 / C-125) (Bacillus halodurans), this protein is 2-methylisocitrate lyase.